A 78-amino-acid polypeptide reads, in one-letter code: MKNLLLTFLVVTIVCLDLGYTLICHQVHGLQTCEPAQKFCQIRTTMFFPNHPVLLMGCTYNCPTERYSVCCSTDKCNK.

Residues 1–21 (MKNLLLTFLVVTIVCLDLGYT) form the signal peptide. Intrachain disulfides connect Cys24/Cys40, Cys33/Cys58, Cys62/Cys70, and Cys71/Cys76.

This sequence belongs to the three-finger toxin family. Short-chain subfamily. As to expression, expressed by the venom gland.

The protein localises to the secreted. Functionally, this three-finger toxin binds and inhibits the nicotinic acetylcholine receptor (nAChR). The sequence is that of Short neurotoxin OH-46 from Ophiophagus hannah (King cobra).